The following is a 152-amino-acid chain: Small ribosomal subunit protein uS15 (152 aa).

It belongs to the universal ribosomal protein uS15 family. Part of the 30S ribosomal subunit.

This is Small ribosomal subunit protein uS15 from Methanocorpusculum labreanum (strain ATCC 43576 / DSM 4855 / Z).